The primary structure comprises 440 residues: uncharacterized protein (440 aa).

The N-terminal stretch at 1–19 (MKKLLLAASIVYFASACLA) is a signal peptide.

This is an uncharacterized protein from Rickettsia prowazekii (strain Madrid E).